Consider the following 226-residue polypeptide: Urease accessory protein UreF (226 aa).

It belongs to the UreF family. In terms of assembly, ureD, UreF and UreG form a complex that acts as a GTP-hydrolysis-dependent molecular chaperone, activating the urease apoprotein by helping to assemble the nickel containing metallocenter of UreC. The UreE protein probably delivers the nickel.

The protein localises to the cytoplasm. Functionally, required for maturation of urease via the functional incorporation of the urease nickel metallocenter. This Burkholderia ambifaria (strain MC40-6) protein is Urease accessory protein UreF.